A 183-amino-acid polypeptide reads, in one-letter code: Der GTPase-activating protein YihI (183 aa).

A disordered region spans residues 1-101; that stretch reads MSRSKKTRKG…KLTDEQKLLK (101 aa). Composition is skewed to basic and acidic residues over residues 22–46 and 92–101; these read KKQD…RHNE and KLTDEQKLLK.

Belongs to the YihI family. Interacts with Der.

Functionally, a GTPase-activating protein (GAP) that modifies Der/EngA GTPase function. May play a role in ribosome biogenesis. This is Der GTPase-activating protein YihI from Shewanella oneidensis (strain ATCC 700550 / JCM 31522 / CIP 106686 / LMG 19005 / NCIMB 14063 / MR-1).